Here is a 285-residue protein sequence, read N- to C-terminus: HTH-type transcriptional regulator MurR (285 aa).

The region spanning 1–77 (MLYLTKIRNA…MALIGEYSAS (77 aa)) is the HTH rpiR-type domain. A DNA-binding region (H-T-H motif) is located at residues 37-56 (SRKMAKQLGISQSSIVKFAQ). The region spanning 128–268 (IIEVISKAPF…FVGLVQLNDV (141 aa)) is the SIS domain.

As to quaternary structure, homotetramer.

It participates in amino-sugar metabolism; N-acetylmuramate degradation [regulation]. Its function is as follows. Represses the expression of the murPQ operon involved in the uptake and degradation of N-acetylmuramic acid (MurNAc). Binds to two adjacent inverted repeats within the operator region. MurNAc 6-phosphate, the substrate of MurQ, is the specific inducer that weakens binding of MurR to the operator. The chain is HTH-type transcriptional regulator MurR from Escherichia coli O157:H7.